Here is a 117-residue protein sequence, read N- to C-terminus: Protein GL2-INTERACTING REPRESSOR 2 (117 aa).

The tract at residues methionine 1–threonine 56 is disordered. The short motif at lysine 10–leucine 15 is the EAR element. A compositionally biased stretch (low complexity) spans arginine 31–threonine 49.

Interacts with GL2. Interacts with TPL.

The protein resides in the nucleus. Functionally, acts as a negative regulator of root hair development redundantly with GIR1. GIR1 and GIR2 may function as adapter proteins that associate with GL2 and participate in the control of root hair formation. GIR1 and GIR2 may function as adapter proteins that associate with TPL and participate in the repression of root gene expression. This Arabidopsis thaliana (Mouse-ear cress) protein is Protein GL2-INTERACTING REPRESSOR 2.